We begin with the raw amino-acid sequence, 437 residues long: Purple acid phosphatase 18 (437 aa).

An N-terminal signal peptide occupies residues 1–23 (MEKWGILLLVTLSVSIIFTSAAA). Fe cation is bound by residues aspartate 148, aspartate 175, and tyrosine 178. Aspartate 175 is a binding site for Zn(2+). Residues asparagine 208 and histidine 291 each coordinate Zn(2+). Asparagine 208 contacts substrate. Histidine 301 functions as the Proton donor in the catalytic mechanism. Position 328 (histidine 328) interacts with Zn(2+). 328–330 (HVH) lines the substrate pocket. Histidine 330 lines the Fe cation pocket. The N-linked (GlcNAc...) asparagine glycan is linked to asparagine 390.

The protein belongs to the metallophosphoesterase superfamily. Purple acid phosphatase family. As to quaternary structure, homodimer. The cofactor is Fe cation. It depends on Zn(2+) as a cofactor. In terms of tissue distribution, expressed in roots, stems, leaves, flowers and siliques.

It is found in the secreted. It catalyses the reaction a phosphate monoester + H2O = an alcohol + phosphate. This chain is Purple acid phosphatase 18 (PAP18), found in Arabidopsis thaliana (Mouse-ear cress).